A 176-amino-acid chain; its full sequence is MSMRKIYLISDTHFNHANIIKYCNRPFSNVEEMNKTLIKNWNNVVRDKDIVYFLGDLILSKNKAKKARELLELLNGEIVFIRGNHDKFGEKFRVIEYNGYKFMLIHNPDSSYTLNFDGWIIHGHHHANHLDEYPFINPKRKSINVSVEVINYKPVSLDLIVKLIEKGKVVRTINDL.

This is an uncharacterized protein from Methanocaldococcus jannaschii (strain ATCC 43067 / DSM 2661 / JAL-1 / JCM 10045 / NBRC 100440) (Methanococcus jannaschii).